The following is a 424-amino-acid chain: MSEQEKTPPAAAEPQPPVDNKPTDAPAQPEHPPTDGNDKTEQPATEAAPAEAPTEQPKQDDAAQPADNKPDYLAKNPALSEFFDRLPAILSSAGHNEMWGVTLRDSADVPTVNVMIKFLRANEGNVKQAEDQLIKALQWRKEMDPTALVDTASYSASKFGGLGYLTTYQDANGKETVVTWNIYGAVKKIDETFGNMDEFLKWRVALMEMAVKELKMDQATTVMDYNADEDPYQMLQVHDYLNVSFLRINPNLRAATKKTIEVFAMAYPELLREKFFVNVPAIMGWMFAAMKVFLSKNTTRKFHPISNGANLAREFPSPLKDQFPKAYGGNGPALQDNARTVNLVADPEPAQEASKDEAQEAPKDAPKEEPKEEPKEEPKEEPKEEPKEEPKEESKAETTQESADAPEKNDAAVTEAPAPAAEAK.

The disordered stretch occupies residues 1-74; sequence MSEQEKTPPA…PADNKPDYLA (74 aa). Residues 32-41 are compositionally biased toward basic and acidic residues; that stretch reads PPTDGNDKTE. The segment covering 42-56 has biased composition (low complexity); the sequence is QPATEAAPAEAPTEQ. The CRAL-TRIO domain maps to 152–335; that stretch reads ASYSASKFGG…AYGGNGPALQ (184 aa). Residues Tyr183, Arg203, His238, Tyr240, and Lys274 each contribute to the heme site. The interval 348-424 is disordered; that stretch reads EPAQEASKDE…EAPAPAAEAK (77 aa). Residues 353–398 show a composition bias toward basic and acidic residues; sequence ASKDEAQEAPKDAPKEEPKEEPKEEPKEEPKEEPKEEPKEESKAET. The span at 411 to 424 shows a compositional bias: low complexity; sequence AAVTEAPAPAAEAK.

This sequence belongs to the SFH5 family. Requires heme b as cofactor.

Its subcellular location is the cytoplasm. It is found in the endoplasmic reticulum membrane. The protein localises to the microsome membrane. It catalyses the reaction a 1,2-diacyl-sn-glycero-3-phospho-(1D-myo-inositol)(in) = a 1,2-diacyl-sn-glycero-3-phospho-(1D-myo-inositol)(out). Non-classical phosphatidylinositol (PtdIns) transfer protein (PITP), which exhibits PtdIns-binding/transfer activity in the absence of detectable PtdCho-binding/transfer activity. Regulates PtdIns(4,5)P2 homeostasis at the plasma membrane. Heme-binding protein that may play a role in organic oxidant-induced stress responses. This chain is Phosphatidylinositol transfer protein sfh5 (sfh5), found in Aspergillus terreus (strain NIH 2624 / FGSC A1156).